The following is a 194-amino-acid chain: Chromophore lyase CpcT/CpeT 1 (194 aa).

This sequence belongs to the CpcT/CpeT biliprotein lyase family.

Functionally, covalently attaches a chromophore to Cys residue(s) of phycobiliproteins. The polypeptide is Chromophore lyase CpcT/CpeT 1 (Microcystis aeruginosa (strain NIES-843 / IAM M-2473)).